The following is a 450-amino-acid chain: MILLVNLFVLLSVVCVLLNLAGFILGCQGAQFVSSVPRCDLVDLGEGKICFCCEEFQPAKCTDKENALKLFPVQPCSAVHLLLKKVLFALCALNALTTTVCLVAAALRYLQIFATRRSCIDESQISAEEAEDHGRIPDPDDFVPPVPPPSYFATFYSCTPRMNRRMVGPDVIPLPHIYGARIKGVEVFCPLDPPPPYEAVVSQMDQEQGSSFQMSEGSEAAVIPLDLGCTQVTQDGDIPNIPAEENASTSTPSSTLVRPIRSRRALPPLRTRSKSDPVLHPSEERAAPVLSCEAATQTERRLDLAAVTLRRGLRSRASRCRPRSLIDYKSYMDTKLLVARFLEQSSCTMTPDIHELVENIKSVLKSDEEHMEEAITSASFLEQIMAPLQPSTSRAHKLPSRRQPGLLHLQSCGDLHTFTPAGRPRAERRPRRVEAERPHSLIGVIRETVL.

The N-terminal stretch at Met-1–Gly-29 is a signal peptide. The Lumenal portion of the chain corresponds to Ala-30–Lys-85. Residues Val-86–Ala-106 traverse the membrane as a helical segment. Over Leu-107 to Leu-450 the chain is Cytoplasmic. Positions Leu-107 to Leu-450 are mediates interaction with EPN1. 2 short sequence motifs (PPxY; mediates interaction with ITCH) span residues Pro-148–Tyr-151 and Pro-194–Tyr-197. A disordered region spans residues Asp-235–Glu-284. Positions Asn-246 to Leu-256 are enriched in polar residues. Positions Ser-273–Glu-284 are enriched in basic and acidic residues. Residue Lys-274 forms a Glycyl lysine isopeptide (Lys-Gly) (interchain with G-Cter in ubiquitin) linkage. Residue Ser-275 is modified to Phosphoserine. Glycyl lysine isopeptide (Lys-Gly) (interchain with G-Cter in ubiquitin) cross-links involve residues Lys-329 and Lys-365.

It belongs to the ENTREP family. In terms of assembly, interacts with ITCH; enhances the ubiquitination of CXCR4 by ITCH and the subsequent endocytosis and desensitization of the receptor. Interacts with EPN1. In terms of processing, monoubiquitinated at Lys-274, Lys-329 and Lys-365 by ITCH. As to expression, prominently expressed in muscle.

Its subcellular location is the early endosome membrane. It localises to the late endosome membrane. The protein localises to the recycling endosome membrane. It is found in the cell membrane. Functionally, functions as an activator of the E3 ubiquitin protein ligase ITCH in the ubiquitination of the CXCL12-activated CXCR4 receptor. Thereby, triggers CXCR4 endocytosis and desensitization, negatively regulating the CXCL12/CXCR4 signaling pathway. The protein is Endosomal transmembrane epsin interactor 1 of Homo sapiens (Human).